Here is a 507-residue protein sequence, read N- to C-terminus: MTRLVWFCMQVAYCLHGWDWDIMDRGRSSNSYDSLWGGKARDNPIVSQLPLQYRIRSALTQEQQTAYQVMYRIQEITIKLRTNDLNPPTSRYRSLSPPPVYDSQGKRTNTREHRYRKKLEEERHRLVEIALKMIPHFIAPDDYRRPSKFQDKYYIPINDYPEINFVGLLLGPRGNTLKQLQQQSGCKIVIRGRGSVKEGKAATDLPKGAMNMNEPLHCVISADTEEKIPLGINAVESIIIKAITSPEGQNDLKRGQLRELAVLNGTLREDNRPCPLCGEQGHKKWECSSNPSLSMTVICQRCNQPGHAARDCTSPLNEFGKRTSDGPEFRETKKLQQDAPPPSGPVGSHPSAPGSGSANSGVAPASLHPPGTMAPPGALPPPGSLAAPGTLPPPAALPAPAAPGTLPPPVALPAPATLPQAGVPPAPDASPAVKTAVPIEGPPAPPQTAPPLRQTAATASSAGSSQSAQEEPENARNGVEKAAPGPPAAVLPPPPPPPPPPPPPPSS.

Polar residues predominate over residues 84–93; the sequence is DLNPPTSRYR. Residues 84-110 are disordered; sequence DLNPPTSRYRSLSPPPVYDSQGKRTNT. The 67-residue stretch at 154–220 folds into the KH domain; the sequence is YIPINDYPEI…NMNEPLHCVI (67 aa). CCHC-type zinc fingers lie at residues 272–289 and 297–314; these read RPCPLCGEQGHKKWECSS and VICQRCNQPGHAARDCTS. The disordered stretch occupies residues 307-507; it reads HAARDCTSPL…PPPPPPPPSS (201 aa). Positions 319 to 336 are enriched in basic and acidic residues; it reads FGKRTSDGPEFRETKKLQ. Residues 345 to 376 are compositionally biased toward low complexity; the sequence is PVGSHPSAPGSGSANSGVAPASLHPPGTMAPP. Pro residues-rich tracts occupy residues 390–412 and 440–449; these read TLPPPAALPAPAAPGTLPPPVAL and EGPPAPPQTA. Residues 450-469 show a composition bias toward low complexity; it reads PPLRQTAATASSAGSSQSAQ. The segment covering 484–507 has biased composition (pro residues); sequence PGPPAAVLPPPPPPPPPPPPPPSS.

This sequence belongs to the BBP/SF1 family.

It localises to the nucleus. In terms of biological role, necessary for the splicing of pre-mRNA. Has a role in the recognition of the branch site (5'-UACUAAC-3'), the pyrimidine tract and the 3'-splice site at the 3'-end of introns. This is Branchpoint-bridging protein (BBP) from Eremothecium gossypii (strain ATCC 10895 / CBS 109.51 / FGSC 9923 / NRRL Y-1056) (Yeast).